We begin with the raw amino-acid sequence, 100 residues long: Urease subunit gamma (100 aa).

Belongs to the urease gamma subunit family. In terms of assembly, heterotrimer of UreA (gamma), UreB (beta) and UreC (alpha) subunits. Three heterotrimers associate to form the active enzyme.

The protein resides in the cytoplasm. It carries out the reaction urea + 2 H2O + H(+) = hydrogencarbonate + 2 NH4(+). Its pathway is nitrogen metabolism; urea degradation; CO(2) and NH(3) from urea (urease route): step 1/1. This is Urease subunit gamma from Lysinibacillus sphaericus (strain C3-41).